Reading from the N-terminus, the 201-residue chain is Probable phosphopantothenoylcysteine decarboxylase (201 aa).

FMN-binding positions include 20-22 (GSV), 45-47 (SKS), 98-101 (SANT), and Ala-132. Substrate-binding positions include Asn-134 and 164 to 166 (KLA). The active-site Proton donor is the Cys-167. Met-175 contacts substrate.

Belongs to the HFCD (homooligomeric flavin containing Cys decarboxylase) superfamily. As to quaternary structure, homotrimer. Requires FMN as cofactor. Expressed in roots, shoots, leaves, flowers, developing siliques and seeds.

The enzyme catalyses N-[(R)-4-phosphopantothenoyl]-L-cysteine + H(+) = (R)-4'-phosphopantetheine + CO2. Its pathway is cofactor biosynthesis; coenzyme A biosynthesis; CoA from (R)-pantothenate: step 3/5. In terms of biological role, involved in plant growth and salt and osmotic tolerance. Catalyzes the decarboxylation of 4'-phosphopantothenoylcysteine to 4'-phosphopantetheine, a key step in coenzyme A biosynthesis. The enzyme is also able to decarboxylate pantothenoylcysteine to pantothenoylcysteamine. The polypeptide is Probable phosphopantothenoylcysteine decarboxylase (HAL3B) (Arabidopsis thaliana (Mouse-ear cress)).